A 203-amino-acid polypeptide reads, in one-letter code: A-type ATP synthase subunit E (203 aa).

Belongs to the V-ATPase E subunit family. As to quaternary structure, has multiple subunits with at least A(3), B(3), C, D, E, F, H, I and proteolipid K(x).

The protein localises to the cell membrane. In terms of biological role, component of the A-type ATP synthase that produces ATP from ADP in the presence of a proton gradient across the membrane. The sequence is that of A-type ATP synthase subunit E from Methanococcus maripaludis (strain C7 / ATCC BAA-1331).